Reading from the N-terminus, the 157-residue chain is MQFMLLFSRQGKLRLQKWYVPLSDKEKKKITRELVQTVLARKPKMCSFLEWRDLKIVYKRYASLYFCCAIEDQDNELITLEIIHRYVELLDKYFGSVCELDIIFNFEKAYFILDEFLLGGEVQETSKKNVLKAIEQADLLQEEAETPRSVLEEIGLT.

Belongs to the adaptor complexes small subunit family. In terms of assembly, adaptor protein complex 1 (AP-1) is a heterotetramer composed of two large adaptins (gamma-type subunit AP1G1 and beta-type subunit AP1B1), a medium adaptin (mu-type subunit AP1M1 or AP1M2) and a small adaptin (sigma-type subunit AP1S1 or AP1S2 or AP1S3). Binds to MUC1. As to expression, widely expressed.

The protein resides in the golgi apparatus. Its subcellular location is the cytoplasmic vesicle membrane. It localises to the membrane. The protein localises to the clathrin-coated pit. In terms of biological role, subunit of clathrin-associated adaptor protein complex 1 that plays a role in protein sorting in the late-Golgi/trans-Golgi network (TGN) and/or endosomes. The AP complexes mediate both the recruitment of clathrin to membranes and the recognition of sorting signals within the cytosolic tails of transmembrane cargo molecules. In Homo sapiens (Human), this protein is AP-1 complex subunit sigma-2 (AP1S2).